Consider the following 204-residue polypeptide: Octanoyltransferase (204 aa).

A BPL/LPL catalytic domain is found at 27–202 (QGGEEALLLL…RFQPFLHLHL (176 aa)). Residues 65–72 (RGGDVTYH), 132–134 (SIG), and 145–147 (GFA) contribute to the substrate site. Catalysis depends on cysteine 163, which acts as the Acyl-thioester intermediate.

This sequence belongs to the LipB family.

The protein localises to the cytoplasm. It catalyses the reaction octanoyl-[ACP] + L-lysyl-[protein] = N(6)-octanoyl-L-lysyl-[protein] + holo-[ACP] + H(+). The protein operates within protein modification; protein lipoylation via endogenous pathway; protein N(6)-(lipoyl)lysine from octanoyl-[acyl-carrier-protein]: step 1/2. In terms of biological role, catalyzes the transfer of endogenously produced octanoic acid from octanoyl-acyl-carrier-protein onto the lipoyl domains of lipoate-dependent enzymes. Lipoyl-ACP can also act as a substrate although octanoyl-ACP is likely to be the physiological substrate. This is Octanoyltransferase from Geobacter sp. (strain M21).